Here is a 252-residue protein sequence, read N- to C-terminus: Triosephosphate isomerase (252 aa).

Residue 9–11 (NWK) coordinates substrate. The Electrophile role is filled by H95. Catalysis depends on E167, which acts as the Proton acceptor. Residues G173, S213, and 234–235 (GG) contribute to the substrate site.

The protein belongs to the triosephosphate isomerase family. In terms of assembly, homodimer.

It is found in the cytoplasm. The catalysed reaction is D-glyceraldehyde 3-phosphate = dihydroxyacetone phosphate. It functions in the pathway carbohydrate biosynthesis; gluconeogenesis. The protein operates within carbohydrate degradation; glycolysis; D-glyceraldehyde 3-phosphate from glycerone phosphate: step 1/1. In terms of biological role, involved in the gluconeogenesis. Catalyzes stereospecifically the conversion of dihydroxyacetone phosphate (DHAP) to D-glyceraldehyde-3-phosphate (G3P). The sequence is that of Triosephosphate isomerase from Syntrophotalea carbinolica (strain DSM 2380 / NBRC 103641 / GraBd1) (Pelobacter carbinolicus).